Here is a 211-residue protein sequence, read N- to C-terminus: Urease accessory protein UreG (211 aa).

11 to 18 (GPVGAGKT) lines the GTP pocket.

This sequence belongs to the SIMIBI class G3E GTPase family. UreG subfamily. In terms of assembly, homodimer. UreD, UreF and UreG form a complex that acts as a GTP-hydrolysis-dependent molecular chaperone, activating the urease apoprotein by helping to assemble the nickel containing metallocenter of UreC. The UreE protein probably delivers the nickel.

The protein resides in the cytoplasm. Its function is as follows. Facilitates the functional incorporation of the urease nickel metallocenter. This process requires GTP hydrolysis, probably effectuated by UreG. The chain is Urease accessory protein UreG from Actinobacillus pleuropneumoniae serotype 7 (strain AP76).